A 323-amino-acid chain; its full sequence is Peridinin-chlorophyll a-binding protein 3 (323 aa).

A run of 2 repeats spans residues D1–P173 and D174–V323.

Homotrimer.

Its subcellular location is the plastid. It is found in the chloroplast. Water-soluble antenna for capture of solar energy in the blue-green range. Peridinin is an asymmetric carotenoid. This chain is Peridinin-chlorophyll a-binding protein 3, found in Amphidinium carterae (Dinoflagellate).